A 302-amino-acid chain; its full sequence is Glycine--tRNA ligase alpha subunit (302 aa).

Belongs to the class-II aminoacyl-tRNA synthetase family. Tetramer of two alpha and two beta subunits.

It localises to the cytoplasm. It catalyses the reaction tRNA(Gly) + glycine + ATP = glycyl-tRNA(Gly) + AMP + diphosphate. The sequence is that of Glycine--tRNA ligase alpha subunit from Haemophilus influenzae (strain 86-028NP).